Here is a 96-residue protein sequence, read N- to C-terminus: Beta-defensin 20 (96 aa).

Residues 1 to 21 form the signal peptide; the sequence is MKLPQLLLILLFVVLADSVQP. Cystine bridges form between Cys-24-Cys-52, Cys-32-Cys-46, and Cys-36-Cys-53.

Belongs to the beta-defensin family.

The protein resides in the secreted. Has antibacterial activity. The polypeptide is Beta-defensin 20 (Defb20) (Rattus norvegicus (Rat)).